A 520-amino-acid chain; its full sequence is Probable E3 ubiquitin-protein ligase rbrA (520 aa).

Acidic residues predominate over residues 1–42; that stretch reads MTDDEMYEDYDVDDDSAEESGNESLDDTEYDDAATQEFDFDE. The segment at 1-51 is disordered; that stretch reads MTDDEMYEDYDVDDDSAEESGNESLDDTEYDDAATQEFDFDENQPQRSLGK. Positions 135–354 are TRIAD supradomain; that stretch reads GNVSCLICLE…GGYYNCNKYD (220 aa). The Zn(2+) site is built by C139, C142, C156, H158, C161, C164, C184, C189, C228, C233, C250, C252, C257, C260, H268, C273, C300, and C303. The RING-type 1 zinc-finger motif lies at 139-189; it reads CLICLEDYPPTQTFALICNHRYCLPCYKNYLEIKVSEGPECIYTPCPAPKC. Residues 208-273 form an IBR-type zinc finger; sequence ERFNNFILKS…EIGDHMPCPC (66 aa). The RING-type 2; atypical zinc-finger motif lies at 300 to 333; that stretch reads CPECRSPIEKNGGCMHMTCRKNAGGCGFEFCWLC. Residue C313 is part of the active site. Residues C318, C325, C330, C333, H340, and C350 each contribute to the Zn(2+) site.

This sequence belongs to the RBR family.

The enzyme catalyses [E2 ubiquitin-conjugating enzyme]-S-ubiquitinyl-L-cysteine + [acceptor protein]-L-lysine = [E2 ubiquitin-conjugating enzyme]-L-cysteine + [acceptor protein]-N(6)-ubiquitinyl-L-lysine.. Its pathway is protein modification; protein ubiquitination. Its function is as follows. Might act as an E3 ubiquitin-protein ligase. Appears to be required for normal cell-type proportioning and cell sorting during multicellular development. In addition to being necessary for a normal percentage of prestalk cells and the organization of the slug, rbrA is also necessary for spore cell viability. The polypeptide is Probable E3 ubiquitin-protein ligase rbrA (rbrA) (Dictyostelium discoideum (Social amoeba)).